The sequence spans 147 residues: Small ribosomal subunit protein uS12 (147 aa).

This sequence belongs to the universal ribosomal protein uS12 family. Part of the 30S ribosomal subunit.

In terms of biological role, with S4 and S5 plays an important role in translational accuracy. Located at the interface of the 30S and 50S subunits. The polypeptide is Small ribosomal subunit protein uS12 (Sulfurisphaera tokodaii (strain DSM 16993 / JCM 10545 / NBRC 100140 / 7) (Sulfolobus tokodaii)).